A 685-amino-acid polypeptide reads, in one-letter code: Mitotic interactor and substrate of PLK1 (685 aa).

Phosphoserine; by CDK1 is present on serine 78. 2 disordered regions span residues 155–181 and 207–253; these read SGTVATLQAAPDHGDPRTPGPPRSTPL and NKEV…QGKG. Residue threonine 172 is modified to Phosphothreonine; by CDK1. Threonine 179 carries the post-translational modification Phosphothreonine. A Phosphoserine; by CDK1 modification is found at serine 214. Threonine 219 is subject to Phosphothreonine. Serine 284 is subject to Phosphoserine; by CDK1. Threonine 287 is subject to Phosphothreonine; by CDK1. Positions 345–499 are disordered; sequence GRPSLYVQRD…PWKLPRGSPQ (155 aa). Serine 348 is modified (phosphoserine). Residues 355–371 are compositionally biased toward basic and acidic residues; that stretch reads MVQETQREEDHRREGLH. Threonine 377 is subject to Phosphothreonine; by CDK1. Residue serine 382 is modified to Phosphoserine. Residues 392 to 417 show a composition bias toward low complexity; sequence ALSSDSILSPDSILSPAPDARAADPA. Phosphoserine; by PLK1 is present on residues serine 394, serine 395, and serine 397. 2 positions are modified to phosphoserine: serine 406 and serine 436. The span at 454–469 shows a compositional bias: polar residues; that stretch reads SGLSTVDTEAATSPKA. Residue serine 477 is modified to Phosphoserine; by PLK1. Over residues 478 to 488 the composition is skewed to polar residues; that stretch reads ESSGKPMSTKQ. Phosphoserine occurs at positions 547 and 549. Residues 551-575 are a coiled coil; sequence DLLERERESVLRREREVAEERRNAL. 2 disordered regions span residues 575-607 and 629-651; these read LFPEVFSPTPDESCDQNSRSSSQASGITGSYSV and PVDSAPPGQRKKEQWYAGINPSD. Serine 581 carries the phosphoserine; by PLK1 modification. At threonine 583 the chain carries Phosphothreonine. The segment covering 589-607 has biased composition (polar residues); that stretch reads DQNSRSSSQASGITGSYSV. Residue serine 592 is modified to Phosphoserine; by PLK1. Serine 681 carries the post-translational modification Phosphoserine.

This sequence belongs to the MISP family. Associates with F-actin. Interacts with DCTN1; this interaction regulates DCTN1 distribution at the cell cortex. Interacts with PTK2/FAK and MAPRE1. Phosphorylated by CDK1 and PLK1. CDK1 is the priming kinase for PLK1 phosphorylation. Phosphorylation by PLK1 is required for proper spindle orientation at metaphase.

It localises to the cell junction. It is found in the focal adhesion. The protein resides in the cytoplasm. The protein localises to the cytoskeleton. Its subcellular location is the cell cortex. Functionally, plays a role in mitotic spindle orientation and mitotic progression. Regulates the distribution of dynactin at the cell cortex in a PLK1-dependent manner, thus stabilizing cortical and astral microtubule attachments required for proper mitotic spindle positioning. May link microtubules to the actin cytospkeleton and focal adhesions. May be required for directed cell migration and centrosome orientation. May also be necessary for proper stacking of the Golgi apparatus. The chain is Mitotic interactor and substrate of PLK1 from Pongo abelii (Sumatran orangutan).